We begin with the raw amino-acid sequence, 265 residues long: Ubiquinone biosynthesis protein COQ4 homolog, mitochondrial (265 aa).

Zn(2+) is bound by residues His-162, Asp-163, His-166, and Glu-178.

The protein belongs to the COQ4 family. As to quaternary structure, component of a multi-subunit COQ enzyme complex. Requires Zn(2+) as cofactor.

It is found in the mitochondrion inner membrane. It catalyses the reaction a 4-hydroxy-3-methoxy-5-(all-trans-polyprenyl)benzoate + H(+) = a 2-methoxy-6-(all-trans-polyprenyl)phenol + CO2. Its pathway is cofactor biosynthesis; ubiquinone biosynthesis. Its function is as follows. Lyase that catalyzes the C1-decarboxylation of 4-hydroxy-3-methoxy-5-(all-trans-polyprenyl)benzoic acid into 2-methoxy-6-(all-trans-polyprenyl)phenol during ubiquinone biosynthesis. This chain is Ubiquinone biosynthesis protein COQ4 homolog, mitochondrial, found in Drosophila willistoni (Fruit fly).